Here is a 506-residue protein sequence, read N- to C-terminus: Protein MGF 505-9R (506 aa).

ANK repeat units follow at residues 54–83 (SIHKALQIAASEGNEDIVKLLILWNGNLKY), 253–283 (QVDTVLFQAVKYNHRKILAHFIHHVPREIVE), and 313–343 (FVKKLLHAVVKHKFMLIIKLLLERPKKKINL).

This sequence belongs to the asfivirus MGF 505 family.

Its function is as follows. Plays a role in virus cell tropism, and may be required for efficient virus replication in macrophages. This African swine fever virus (isolate Tick/Malawi/Lil 20-1/1983) (ASFV) protein is Protein MGF 505-9R.